Here is a 435-residue protein sequence, read N- to C-terminus: Eukaryotic translation initiation factor 3 subunit E (435 aa).

In terms of domain architecture, PCI spans 219–392 (FFNHPKGRDL…GHVVMGTQPL (174 aa)).

The protein belongs to the eIF-3 subunit E family. In terms of assembly, component of the eukaryotic translation initiation factor 3 (eIF-3) complex. The eIF-3 complex interacts with pix. Interacts with mxt.

It is found in the cytoplasm. Component of the eukaryotic translation initiation factor 3 (eIF-3) complex, which is involved in protein synthesis of a specialized repertoire of mRNAs and, together with other initiation factors, stimulates binding of mRNA and methionyl-tRNAi to the 40S ribosome. The eIF-3 complex specifically targets and initiates translation of a subset of mRNAs involved in cell proliferation. The sequence is that of Eukaryotic translation initiation factor 3 subunit E (eIF3-S6) from Drosophila erecta (Fruit fly).